The sequence spans 195 residues: Ras-related protein Rab-31 (195 aa).

The GTP site is built by Gly-16, Gly-18, Lys-19, Ser-20, Ser-21, Asp-32, and His-33. Mg(2+) is bound at residue Ser-20. Short sequence motifs (switch) lie at residues 30-42 (HFDH…IGAS) and 63-79 (AGQE…YRGS). Residue Ser-36 is modified to Phosphoserine. 6 residues coordinate GTP: Thr-38, Gly-64, Asn-119, Asp-122, Ala-150, and Lys-151. Thr-38 contributes to the Mg(2+) binding site. The disordered stretch occupies residues 168–195 (PPLGPQENGNSGGIKLGNQSLQASRRCC). Residues 184-195 (GNQSLQASRRCC) are compositionally biased toward polar residues. 2 S-geranylgeranyl cysteine lipidation sites follow: Cys-194 and Cys-195.

This sequence belongs to the small GTPase superfamily. Rab family. In terms of assembly, interacts with OCRL. Interacts (in GDP-bound form) with RIN3 and GAPVD1, which function as guanine exchange factors (GEF). Interacts with EGFR. Interacts with NGFR. Interacts (in GTP-bound form) with EEA1. Interacts (in GTP-bound form) with APPL2; interaction contributes to or enhances recruitment of APPL2 to the phagosomes; interaction enhances Fc-gamma receptor-mediated phagocytosis through PI3K/Akt signaling in macrophages. Requires Mg(2+) as cofactor. Detected in brain astrocytes (at protein level).

Its subcellular location is the early endosome. It localises to the golgi apparatus. It is found in the trans-Golgi network. The protein localises to the trans-Golgi network membrane. The protein resides in the cytoplasmic vesicle. Its subcellular location is the phagosome. It localises to the phagosome membrane. The catalysed reaction is GTP + H2O = GDP + phosphate + H(+). Its activity is regulated as follows. Regulated by guanine nucleotide exchange factors (GEFs) including RIN3 and GAPVD1 which promote the exchange of bound GDP for free GTP. Regulated by GTPase activating proteins (GAPs) which increase the GTP hydrolysis activity. Inhibited by GDP dissociation inhibitors (GDIs) which prevent Rab-GDP dissociation. In terms of biological role, the small GTPases Rab are key regulators of intracellular membrane trafficking, from the formation of transport vesicles to their fusion with membranes. Rabs cycle between an inactive GDP-bound form and an active GTP-bound form that is able to recruit to membranes different set of downstream effectors directly responsible for vesicle formation, movement, tethering and fusion. Required for the integrity and for normal function of the Golgi apparatus and the trans-Golgi network. Plays a role in insulin-stimulated translocation of GLUT4 to the cell membrane. Plays a role in the maturation of phagosomes that engulf pathogens, such as S.aureus and Mycobacterium. Plays a role in M6PR transport from the trans-Golgi network to endosomes. Plays a role in the internalization of EGFR from the cell membrane into endosomes. The protein is Ras-related protein Rab-31 of Mus musculus (Mouse).